We begin with the raw amino-acid sequence, 273 residues long: Homeobox protein Nkx-2.2 (273 aa).

Disordered stretches follow at residues 1-56 and 91-131; these read MSLT…LDAV and AASA…KRKR. The segment covering 20–38 has biased composition (acidic residues); the sequence is DTNDEDGSVAEGPEEESEG. Positions 128–187 form a DNA-binding region, homeobox; it reads KRKRRVLFSKAQTYELERRFRQQRYLSAPEREHLASLIRLTPTQVKIWFQNHRYKMKRAR.

Belongs to the NK-2 homeobox family. Interacts with OLIG2. Expressed in restricted areas of the developing CNS: the hindbrain and forebrain, and pancreas.

Its subcellular location is the nucleus. Its function is as follows. Transcriptional activator involved in the development of insulin-producting beta cells in the endocrine pancreas. May also be involved in specifying diencephalic neuromeric boundaries, and in controlling the expression of genes that play a role in axonal guidance. Binds to elements within the NEUROD1 promoter. This chain is Homeobox protein Nkx-2.2 (Nkx2-2), found in Mus musculus (Mouse).